Here is a 210-residue protein sequence, read N- to C-terminus: Na(+)-translocating NADH-quinone reductase subunit D (210 aa).

6 consecutive transmembrane segments (helical) span residues 14-34, 42-62, 72-92, 103-123, 131-151, and 178-198; these read PIVNNNPIALQVLGVCSALAV, LVMALALTAVTAFSNLFISMI, IIVQMTIIASLVIVVDQLLQA, VFVGLIITNCIVMGRAEAYAM, FMDGIGNGLGYGAILLAVGFV, and NGLLLLPPSAFFLIGILIWII.

It belongs to the NqrDE/RnfAE family. As to quaternary structure, composed of six subunits; NqrA, NqrB, NqrC, NqrD, NqrE and NqrF.

The protein localises to the cell inner membrane. The enzyme catalyses a ubiquinone + n Na(+)(in) + NADH + H(+) = a ubiquinol + n Na(+)(out) + NAD(+). Functionally, NQR complex catalyzes the reduction of ubiquinone-1 to ubiquinol by two successive reactions, coupled with the transport of Na(+) ions from the cytoplasm to the periplasm. NqrA to NqrE are probably involved in the second step, the conversion of ubisemiquinone to ubiquinol. The protein is Na(+)-translocating NADH-quinone reductase subunit D of Shewanella sp. (strain ANA-3).